Reading from the N-terminus, the 314-residue chain is MRTKNSKIINSEQDIFRNKVIPIKFLSNYNNEILKKPQWMKIKFPVSTNKIKNLTLILRQHNLNTVCEQALCPNLAECFNRGTATFMILGSICTRRCPFCAVSHGKPSLVNKNEPQQLARVIFDMKINYVVITSVVRDDLKDRGAQHFSNCIQEIRNKNNVKIEILVPDFRGMMRESCKIISMNPPNVFNHNLENVPRLYKLIRPGASYIRSLKLLEFFKKLNPNVPTKSGLILGLGETYKEIVHVINDLLDHGVTILTIGQYLQPSSKHFPVQKYITPDEFKKIKNYALSIGFKKVFCGPLIRSSYHAEKYFE.

[4Fe-4S] cluster contacts are provided by Cys67, Cys72, Cys78, Cys93, Cys97, Cys100, and Ser306. In terms of domain architecture, Radical SAM core spans 79–295 (FNRGTATFMI…KNYALSIGFK (217 aa)).

This sequence belongs to the radical SAM superfamily. Lipoyl synthase family. The cofactor is [4Fe-4S] cluster.

It is found in the cytoplasm. It catalyses the reaction [[Fe-S] cluster scaffold protein carrying a second [4Fe-4S](2+) cluster] + N(6)-octanoyl-L-lysyl-[protein] + 2 oxidized [2Fe-2S]-[ferredoxin] + 2 S-adenosyl-L-methionine + 4 H(+) = [[Fe-S] cluster scaffold protein] + N(6)-[(R)-dihydrolipoyl]-L-lysyl-[protein] + 4 Fe(3+) + 2 hydrogen sulfide + 2 5'-deoxyadenosine + 2 L-methionine + 2 reduced [2Fe-2S]-[ferredoxin]. Its pathway is protein modification; protein lipoylation via endogenous pathway; protein N(6)-(lipoyl)lysine from octanoyl-[acyl-carrier-protein]: step 2/2. Its function is as follows. Catalyzes the radical-mediated insertion of two sulfur atoms into the C-6 and C-8 positions of the octanoyl moiety bound to the lipoyl domains of lipoate-dependent enzymes, thereby converting the octanoylated domains into lipoylated derivatives. The protein is Lipoyl synthase of Buchnera aphidicola subsp. Baizongia pistaciae (strain Bp).